The chain runs to 190 residues: ATP synthase subunit delta (190 aa).

This sequence belongs to the ATPase delta chain family. As to quaternary structure, F-type ATPases have 2 components, F(1) - the catalytic core - and F(0) - the membrane proton channel. F(1) has five subunits: alpha(3), beta(3), gamma(1), delta(1), epsilon(1). F(0) has three main subunits: a(1), b(2) and c(10-14). The alpha and beta chains form an alternating ring which encloses part of the gamma chain. F(1) is attached to F(0) by a central stalk formed by the gamma and epsilon chains, while a peripheral stalk is formed by the delta and b chains.

The protein localises to the cell inner membrane. In terms of biological role, f(1)F(0) ATP synthase produces ATP from ADP in the presence of a proton or sodium gradient. F-type ATPases consist of two structural domains, F(1) containing the extramembraneous catalytic core and F(0) containing the membrane proton channel, linked together by a central stalk and a peripheral stalk. During catalysis, ATP synthesis in the catalytic domain of F(1) is coupled via a rotary mechanism of the central stalk subunits to proton translocation. Its function is as follows. This protein is part of the stalk that links CF(0) to CF(1). It either transmits conformational changes from CF(0) to CF(1) or is implicated in proton conduction. This is ATP synthase subunit delta from Anaplasma marginale (strain Florida).